The primary structure comprises 647 residues: Carboxypeptidase Z (647 aa).

A signal peptide spans 1–18 (MVPSLLLLLTGLFRATEP). The 123-residue stretch at 35–157 (AQKAKCVDIS…AGEEEGCFDP (123 aa)) folds into the FZ domain. 5 disulfide bridges follow: Cys40/Cys106, Cys48/Cys99, Cys90/Cys126, Cys115/Cys154, and Cys119/Cys143. One can recognise a Peptidase M14 domain in the interval 183-499 (KHHSYSQMVS…DALLNYMEMV (317 aa)). Zn(2+) is bound by residues His245 and Glu248. Asn278 is a glycosylation site (N-linked (GlcNAc...) asparagine). His377 is a binding site for Zn(2+). Residue Glu469 is the Proton donor/acceptor of the active site.

Belongs to the peptidase M14 family. Interacts with WNT4 vie its FZ domain. Zn(2+) is required as a cofactor. As to expression, in the early embryo it is initially expressed throughout the somites and subsequently becomes restricted to the sclerotome. Expressed in somites, paraxial head mesoderm and apical ectodermal ridge.

It is found in the secreted. The protein localises to the extracellular space. Its subcellular location is the extracellular matrix. With respect to regulation, inhibited by 2-mercaptomethyl-3-guanidinoethylthiopropanoic acid (MGTA) and guanidinoethylmercaptosuccinic acid (GEMSA). Inhibited by chelating agents such as EDTA and EGTA. Its function is as follows. Cleaves substrates with C-terminal arginine residues. Modulates the Wnt signaling pathway, probably by cleaving some undefined protein. Regulates the development of skeletal elements during development, probably by activating WNT4. The polypeptide is Carboxypeptidase Z (CPZ) (Gallus gallus (Chicken)).